Here is a 321-residue protein sequence, read N- to C-terminus: Lipoyl synthase (321 aa).

Positions 68, 73, 79, 94, 98, 101, and 308 each coordinate [4Fe-4S] cluster. The Radical SAM core domain occupies 80–297; it reads FNHGTATFMI…KALADELGFT (218 aa).

This sequence belongs to the radical SAM superfamily. Lipoyl synthase family. It depends on [4Fe-4S] cluster as a cofactor.

The protein resides in the cytoplasm. It carries out the reaction [[Fe-S] cluster scaffold protein carrying a second [4Fe-4S](2+) cluster] + N(6)-octanoyl-L-lysyl-[protein] + 2 oxidized [2Fe-2S]-[ferredoxin] + 2 S-adenosyl-L-methionine + 4 H(+) = [[Fe-S] cluster scaffold protein] + N(6)-[(R)-dihydrolipoyl]-L-lysyl-[protein] + 4 Fe(3+) + 2 hydrogen sulfide + 2 5'-deoxyadenosine + 2 L-methionine + 2 reduced [2Fe-2S]-[ferredoxin]. The protein operates within protein modification; protein lipoylation via endogenous pathway; protein N(6)-(lipoyl)lysine from octanoyl-[acyl-carrier-protein]: step 2/2. Its function is as follows. Catalyzes the radical-mediated insertion of two sulfur atoms into the C-6 and C-8 positions of the octanoyl moiety bound to the lipoyl domains of lipoate-dependent enzymes, thereby converting the octanoylated domains into lipoylated derivatives. This chain is Lipoyl synthase, found in Shewanella frigidimarina (strain NCIMB 400).